The following is a 391-amino-acid chain: 8-amino-7-oxononanoate synthase (391 aa).

R19 is a substrate binding site. 106–107 (GY) serves as a coordination point for pyridoxal 5'-phosphate. H131 is a substrate binding site. Residues S178, H206, and T234 each coordinate pyridoxal 5'-phosphate. K237 bears the N6-(pyridoxal phosphate)lysine mark. T353 is a binding site for substrate.

The protein belongs to the class-II pyridoxal-phosphate-dependent aminotransferase family. BioF subfamily. Homodimer. It depends on pyridoxal 5'-phosphate as a cofactor.

It catalyses the reaction 6-carboxyhexanoyl-[ACP] + L-alanine + H(+) = (8S)-8-amino-7-oxononanoate + holo-[ACP] + CO2. It participates in cofactor biosynthesis; biotin biosynthesis. Functionally, catalyzes the decarboxylative condensation of pimeloyl-[acyl-carrier protein] and L-alanine to produce 8-amino-7-oxononanoate (AON), [acyl-carrier protein], and carbon dioxide. This is 8-amino-7-oxononanoate synthase from Geobacter metallireducens (strain ATCC 53774 / DSM 7210 / GS-15).